The following is a 335-amino-acid chain: G-protein coupled receptor 157 (335 aa).

At 1 to 15 (MQPSPPPTELVPSER) the chain is on the extracellular side. A helical transmembrane segment spans residues 16-36 (AVVLLSCALSALGSGLLVATH). Residues 37–48 (ALWPDLRSRARR) lie on the Cytoplasmic side of the membrane. The helical transmembrane segment at 49–69 (LLLFLSLADLLSAASYFYGVL) threads the bilayer. Residues 70–87 (QNFAGPSWDCVLQGALST) lie on the Extracellular side of the membrane. Residues 88–108 (FANTSSFFWTVAIALYLYLSI) traverse the membrane as a helical segment. At 109 to 119 (VRAARGPRTDR) the chain is on the cytoplasmic side. The helical transmembrane segment at 120 to 140 (LLWAFHVVSWGVPLVITVAAV) threads the bilayer. Residues 141–166 (ALKKIGYDASDVSVGWCWIDLEAKDH) are Extracellular-facing. The chain crosses the membrane as a helical span at residues 167–187 (VLWMLLTGKLWEMLAYVLLPL). Residues 188-226 (LYLLVRKHINRAHTALSEYRPILSQEHRLLRHSSMADKK) lie on the Cytoplasmic side of the membrane. Residues 227-247 (LVLIPLIFIGLRVWSTVRFVL) traverse the membrane as a helical segment. The Extracellular segment spans residues 248–258 (TLCGSPAVQTP). A helical transmembrane segment spans residues 259-279 (VLVVLHGIGNTFQGGANCIMF). The Cytoplasmic portion of the chain corresponds to 280 to 335 (VLCTRAVRTRLFSLCCCCCSSQPPTKSPAGTPKAPAPSKPGESQESQGTPGELPST). Positions 300-335 (SQPPTKSPAGTPKAPAPSKPGESQESQGTPGELPST) are disordered. A compositionally biased stretch (polar residues) spans 320–335 (GESQESQGTPGELPST).

This sequence belongs to the G-protein coupled receptor 2 family.

The protein localises to the cell projection. The protein resides in the cilium membrane. Functionally, orphan receptor that promotes neuronal differentiation of radial glial progenitors (RGPs). The activity of this receptor is mediated by a G(q)-protein that activates a phosphatidylinositol-calcium second messenger. This chain is G-protein coupled receptor 157 (GPR157), found in Homo sapiens (Human).